The primary structure comprises 586 residues: MKQSVSAEQIELKSSLPGSKKVYVDGPREGMKVPMREIEQSETNGVPNPPIRVYDTSGPYTDPAYKVELEKGIPTPRHSWIMGRGDVDAYEGREVKPEDDGVKVASKHTPVFPQMDRKPLRAKQGANVTQMHYARNGIITSEMEYVAIREGVEPEFVRKEIAEGRAILPANINHPEAEPMIIGRNFHVKVNANIGNSAVSSSIAEEVEKMTWATRWGADTIMDLSTGKNIHTTREWIIRNAPVPVGTVPIYQALEKVNGIAEDLTWEVYRDTLIEQAEQGVDYFTIHAGVLLRYIPITAKRTTGIVSRGGSIMAQWCLFHHKENFLYTHFEEICEIMKQYDVSFSLGDGLRPGSIADANDEAQFSELETLGELTKIAWKHDVQVMIEGPGHVPMHLIKENMEKELDICQGAPFYTLGPLTTDIAPGYDHITSAIGAAMIGWFGTAMLCYVTPKEHLGLPNKDDVRTGVITYKIAAHAADLAKGHKTAHQRDDALSKARFEFRWRDQFNLSLDPERAMEYHDETLPAEGAKTAHFCSMCGPKFCSMRISHDIREYAKENDLETTEAIEKGMKEKAEEFKEAGSHLYQ.

The disordered stretch occupies residues 1–33 (MKQSVSAEQIELKSSLPGSKKVYVDGPREGMKV). The span at 22–33 (VYVDGPREGMKV) shows a compositional bias: basic and acidic residues. Residues asparagine 193, methionine 222, tyrosine 251, histidine 287, 307-309 (SRG), 348-351 (DGLR), and glutamate 387 contribute to the substrate site. Residue histidine 391 coordinates Zn(2+). Substrate is bound at residue tyrosine 414. Histidine 455 lines the Zn(2+) pocket. [4Fe-4S] cluster contacts are provided by cysteine 535, cysteine 538, and cysteine 543.

It belongs to the ThiC family. The cofactor is [4Fe-4S] cluster.

It catalyses the reaction 5-amino-1-(5-phospho-beta-D-ribosyl)imidazole + S-adenosyl-L-methionine = 4-amino-2-methyl-5-(phosphooxymethyl)pyrimidine + CO + 5'-deoxyadenosine + formate + L-methionine + 3 H(+). Its pathway is cofactor biosynthesis; thiamine diphosphate biosynthesis. In terms of biological role, catalyzes the synthesis of the hydroxymethylpyrimidine phosphate (HMP-P) moiety of thiamine from aminoimidazole ribotide (AIR) in a radical S-adenosyl-L-methionine (SAM)-dependent reaction. This chain is Phosphomethylpyrimidine synthase, found in Bacillus cereus (strain G9842).